We begin with the raw amino-acid sequence, 204 residues long: MTENILRKSDEEIQKEITARVKALESMLIEQGILTTSMIDRMAEIYENEVGPHLGAKVVVKAWTDPEFKKRLLADGTEACKELGIGGLQGEDMMWVENTDEVHHVVVCTLCSCYPWPVLGLPPNWFKEPQYRSRVVREPRQLLKEEFGFEVPPSKEIKVWDSSSEMRFVVLPQRPAGTDGWSEEELATLVTRESMIGVEPAKAV.

Co(2+) is bound by residues Cys-108, Cys-111, Ser-112, and Cys-113. Residue Cys-111 is modified to Cysteine sulfinic acid (-SO2H). Cys-113 is modified (cysteine sulfenic acid (-SOH)).

This sequence belongs to the nitrile hydratase subunit alpha family. As to quaternary structure, heterotetramer of two alpha and two beta chains. Requires Co(2+) as cofactor.

It carries out the reaction an aliphatic primary amide = an aliphatic nitrile + H2O. In terms of biological role, NHase catalyzes the hydration of various nitrile compounds to the corresponding amides. This is Cobalt-containing nitrile hydratase subunit alpha from Pseudonocardia thermophila.